Here is a 122-residue protein sequence, read N- to C-terminus: Large ribosomal subunit protein uL18 (122 aa).

It belongs to the universal ribosomal protein uL18 family. In terms of assembly, part of the 50S ribosomal subunit; part of the 5S rRNA/L5/L18/L25 subcomplex. Contacts the 5S and 23S rRNAs.

Its function is as follows. This is one of the proteins that bind and probably mediate the attachment of the 5S RNA into the large ribosomal subunit, where it forms part of the central protuberance. The sequence is that of Large ribosomal subunit protein uL18 from Mycobacterium tuberculosis (strain ATCC 25177 / H37Ra).